A 500-amino-acid polypeptide reads, in one-letter code: UDP-N-acetylmuramoyl-L-alanyl-D-glutamate--2,6-diaminopimelate ligase (500 aa).

UDP-N-acetyl-alpha-D-muramoyl-L-alanyl-D-glutamate-binding positions include Leu26, Ser28, and 43-45 (HQV). ATP is bound at residue 123 to 129 (GTNGKTT). UDP-N-acetyl-alpha-D-muramoyl-L-alanyl-D-glutamate contacts are provided by residues Asn164, 165-166 (TT), Ser192, Gln198, and Arg200. At Lys232 the chain carries N6-carboxylysine. Meso-2,6-diaminopimelate is bound by residues Arg399, 423 to 426 (DNPR), Gly474, and Glu478. The Meso-diaminopimelate recognition motif motif lies at 423 to 426 (DNPR).

The protein belongs to the MurCDEF family. MurE subfamily. Mg(2+) serves as cofactor. Post-translationally, carboxylation is probably crucial for Mg(2+) binding and, consequently, for the gamma-phosphate positioning of ATP.

It localises to the cytoplasm. It carries out the reaction UDP-N-acetyl-alpha-D-muramoyl-L-alanyl-D-glutamate + meso-2,6-diaminopimelate + ATP = UDP-N-acetyl-alpha-D-muramoyl-L-alanyl-gamma-D-glutamyl-meso-2,6-diaminopimelate + ADP + phosphate + H(+). The protein operates within cell wall biogenesis; peptidoglycan biosynthesis. Its function is as follows. Catalyzes the addition of meso-diaminopimelic acid to the nucleotide precursor UDP-N-acetylmuramoyl-L-alanyl-D-glutamate (UMAG) in the biosynthesis of bacterial cell-wall peptidoglycan. The protein is UDP-N-acetylmuramoyl-L-alanyl-D-glutamate--2,6-diaminopimelate ligase of Actinobacillus pleuropneumoniae serotype 5b (strain L20).